The primary structure comprises 700 residues: Protein kinase C, eye isozyme (700 aa).

2 consecutive Phorbol-ester/DAG-type zinc fingers follow at residues 71-121 (GHRF…VFKC) and 136-186 (KHGW…PPMC). The C2 domain occupies 189-310 (DISEVRGKLL…LQKEPVDGWY (122 aa)). Ca(2+) is bound by residues aspartate 222, aspartate 228, aspartate 281, aspartate 283, serine 286, and aspartate 289. The region spanning 371-629 (FNFVKVIGKG…RQEITTHPFF (259 aa)) is the Protein kinase domain. Residues 377–385 (IGKGSFGKV) and lysine 400 contribute to the ATP site. The active-site Proton acceptor is aspartate 495. The AGC-kinase C-terminal domain maps to 630–700 (RNVDWDKAEA…FMNPEFITII (71 aa)).

It belongs to the protein kinase superfamily. AGC Ser/Thr protein kinase family. PKC subfamily. Ca(2+) is required as a cofactor. In terms of tissue distribution, exclusively expressed in photoreceptor cells.

It catalyses the reaction L-seryl-[protein] + ATP = O-phospho-L-seryl-[protein] + ADP + H(+). The catalysed reaction is L-threonyl-[protein] + ATP = O-phospho-L-threonyl-[protein] + ADP + H(+). This is a calcium-activated, phospholipid-dependent, serine- and threonine-specific enzyme. This isozyme is a negative regulator of the visual transduction cascade and has been shown to be required for photoreceptor cell inactivation and light adaptation. Negative regulation is dependent on interaction with scaffolding protein inaD. Acts in a hh-signaling pathway which regulates the Duox-dependent gut immune response to bacterial uracil; required for the activation of Cad99C and consequently Cad99C-dependent endosome formation, which is essential for the Duox-dependent production of reactive oxygen species (ROS) in response to intestinal bacterial infection. The polypeptide is Protein kinase C, eye isozyme (inaC) (Drosophila melanogaster (Fruit fly)).